Here is a 239-residue protein sequence, read N- to C-terminus: Heptaprenylglyceryl phosphate synthase (239 aa).

Position 12 (Lys-12) interacts with sn-glycerol 1-phosphate. Mg(2+)-binding residues include Asp-14 and Thr-40. Sn-glycerol 1-phosphate contacts are provided by residues 159-164 (YLEYSG), Gly-189, and 209-210 (GN).

Belongs to the GGGP/HepGP synthase family. Group I subfamily. Homodimer. The cofactor is Mg(2+).

The catalysed reaction is sn-glycerol 1-phosphate + all-trans-heptaprenyl diphosphate = 3-heptaprenyl-sn-glycero-1-phosphate + diphosphate. Its pathway is membrane lipid metabolism; glycerophospholipid metabolism. Prenyltransferase that catalyzes in vivo the transfer of the heptaprenyl moiety of heptaprenyl pyrophosphate (HepPP; 35 carbon atoms) to the C3 hydroxyl of sn-glycerol-1-phosphate (G1P), producing heptaprenylglyceryl phosphate (HepGP). This reaction is an ether-bond-formation step in the biosynthesis of archaea-type G1P-based membrane lipids found in Bacillales. To a much lesser extent, is also able to use geranylgeranyl diphosphate (GGPP; C20) as the prenyl donor. This chain is Heptaprenylglyceryl phosphate synthase, found in Geobacillus kaustophilus (strain HTA426).